The sequence spans 113 residues: Endoribonuclease SymE (113 aa).

The SpoVT-AbrB domain occupies 29-74 (SRYPDYSRIPAITLKGQWLEAAGFATGTAVDVKVMEGCIVLTAQPP).

The protein belongs to the SymE family.

Its subcellular location is the cytoplasm. Its function is as follows. Involved in the degradation and recycling of damaged RNA. It is itself a target for degradation by the ATP-dependent protease Lon. The protein is Endoribonuclease SymE of Escherichia coli (strain K12 / MC4100 / BW2952).